Here is a 122-residue protein sequence, read N- to C-terminus: MSRSLSSNGRVRRRKRILKLAKGFRGRCGTNYKAAKDAVSKALAHSYVARRDRKGSMRRLWISRINASVRTQGLSYSRFMNGLLQAGIALNRKVLSNMAIEDPGAFQTVIDASKKALGGGAC.

It belongs to the bacterial ribosomal protein bL20 family.

Binds directly to 23S ribosomal RNA and is necessary for the in vitro assembly process of the 50S ribosomal subunit. It is not involved in the protein synthesizing functions of that subunit. In Treponema pallidum (strain Nichols), this protein is Large ribosomal subunit protein bL20 (rplT).